The chain runs to 212 residues: UPF0111 protein PH1389 (212 aa).

The protein belongs to the UPF0111 family.

This Pyrococcus horikoshii (strain ATCC 700860 / DSM 12428 / JCM 9974 / NBRC 100139 / OT-3) protein is UPF0111 protein PH1389.